A 263-amino-acid polypeptide reads, in one-letter code: Sulfur carrier protein FdhD (263 aa).

The active-site Cysteine persulfide intermediate is Cys-107.

The protein belongs to the FdhD family.

It is found in the cytoplasm. Functionally, required for formate dehydrogenase (FDH) activity. Acts as a sulfur carrier protein that transfers sulfur from IscS to the molybdenum cofactor prior to its insertion into FDH. In Geobacillus kaustophilus (strain HTA426), this protein is Sulfur carrier protein FdhD.